Reading from the N-terminus, the 378-residue chain is MFKPIRKTHPLISIANNALVDLPAPSNISAWWNFGSLLGLCLMLQILTGLFLAMHYAADIETAFNSVNHICRDVNNGWFLRICHANGASFFFACLFIHVGRGVYYESYLYHMTWNTGVIILFLTMATGFLGYVLPWGQMSFWGATVITNLLSAVPYLGMDLVQWIWGGFAVDNATLTRFFTFHFIFPFIILALMMIHLLFLHQTGSNNPLGLNSNVDKIPFHPYFIYKDIFGFIVFLWILVTFIWKFNYLLMDPENFIPANPLVTPVHIQPEWYFLFAYAILRSIPNKLGGVIALVLSIAILLILPFTHSSKFRGLQFYPLNQILFWNMVIVASLLTWIGARPVEDPYILTGQILTVLYFSYFIINPLLAKFWDKLLN.

Transmembrane regions (helical) follow at residues 34–54 (FGSLLGLCLMLQILTGLFLAM), 78–99 (WFLRICHANGASFFFACLFIHV), 114–134 (WNTGVIILFLTMATGFLGYVL), and 179–199 (FFTFHFIFPFIILALMMIHLL). Residues histidine 84 and histidine 98 each coordinate heme b. Residues histidine 183 and histidine 197 each coordinate heme b. Histidine 202 lines the a ubiquinone pocket. The next 4 helical transmembrane spans lie at 227-247 (YKDIFGFIVFLWILVTFIWKF), 289-309 (LGGVIALVLSIAILLILPFTH), 321-341 (LNQILFWNMVIVASLLTWIGA), and 348-368 (YILTGQILTVLYFSYFIINPL).

Belongs to the cytochrome b family. As to quaternary structure, the main subunits of complex b-c1 are: cytochrome b, cytochrome c1 and the Rieske protein. Requires heme b as cofactor.

The protein localises to the mitochondrion inner membrane. Its function is as follows. Component of the ubiquinol-cytochrome c reductase complex (complex III or cytochrome b-c1 complex) that is part of the mitochondrial respiratory chain. The b-c1 complex mediates electron transfer from ubiquinol to cytochrome c. Contributes to the generation of a proton gradient across the mitochondrial membrane that is then used for ATP synthesis. This is Cytochrome b (mt:Cyt-b) from Anopheles gambiae (African malaria mosquito).